The sequence spans 969 residues: RNA polymerase-associated protein RapA (969 aa).

The 171-residue stretch at 164–334 (EVGRRYAPRV…FARLRLLDPD (171 aa)) folds into the Helicase ATP-binding domain. 177-184 (DEVGLGKT) provides a ligand contact to ATP. The DEAH box signature appears at 280–283 (DEAH). In terms of domain architecture, Helicase C-terminal spans 492 to 672 (RVNWLLELLK…GLEPLIEESA (181 aa)).

This sequence belongs to the SNF2/RAD54 helicase family. RapA subfamily. Interacts with the RNAP. Has a higher affinity for the core RNAP than for the holoenzyme. Its ATPase activity is stimulated by binding to RNAP.

Functionally, transcription regulator that activates transcription by stimulating RNA polymerase (RNAP) recycling in case of stress conditions such as supercoiled DNA or high salt concentrations. Probably acts by releasing the RNAP, when it is trapped or immobilized on tightly supercoiled DNA. Does not activate transcription on linear DNA. Probably not involved in DNA repair. This chain is RNA polymerase-associated protein RapA, found in Aliivibrio salmonicida (strain LFI1238) (Vibrio salmonicida (strain LFI1238)).